A 1019-amino-acid chain; its full sequence is Alpha-mannosidase At3g26720 (1019 aa).

The first 22 residues, 1–22 (MAVKCFSLYLILAAIVIGGVTS), serve as a signal peptide directing secretion. Positions 47 and 49 each coordinate Zn(2+). An N-linked (GlcNAc...) asparagine glycan is attached at Asn64. A Zn(2+)-binding site is contributed by Asp169. N-linked (GlcNAc...) asparagine glycosylation is found at Asn278 and Asn336. Zn(2+) is bound at residue His410. The cysteines at positions 466 and 474 are disulfide-linked. N-linked (GlcNAc...) asparagine glycosylation is found at Asn470, Asn638, Asn730, and Asn820. Residues Cys824 and Cys829 are joined by a disulfide bond.

Belongs to the glycosyl hydrolase 38 family. Homodimer. Zn(2+) is required as a cofactor.

The enzyme catalyses Hydrolysis of terminal, non-reducing alpha-D-mannose residues in alpha-D-mannosides.. Its function is as follows. Liberates mannose from p-nitrophenyl-alpha-D-mannoside in vitro. The chain is Alpha-mannosidase At3g26720 from Arabidopsis thaliana (Mouse-ear cress).